Here is a 680-residue protein sequence, read N- to C-terminus: Coiled-coil domain-containing protein 138 (680 aa).

The residue at position 63 (T63) is a Phosphothreonine. S64 carries the post-translational modification Phosphoserine. The stretch at 260–339 forms a coiled coil; sequence KEQHGTEIEH…YEFMTVQRLK (80 aa). The interval 390–410 is disordered; sequence EPEEPGVDGGKPPAKPSQRSD. S484 carries the post-translational modification Phosphoserine.

The protein is Coiled-coil domain-containing protein 138 (Ccdc138) of Mus musculus (Mouse).